Consider the following 654-residue polypeptide: MRGSRNLLTQRLASSRATGSSGGLKFVGATVGAVTAGAAGVAGYASYDNEFRKKLEGVIPGSRTILNYTIGEEEPPAPRLKDLRPLQYSADPKVPPKPFEPKPVKKELIGVKENLKETTEPKKIEKKPENPYIGAKTPLNPQERNEKLTESLKNHLTQAEKATKVATSAKLETIRAIEHHVQTIREAIEAGKDGDWDSVTVAHLKAKRLAEKDEKAEKLARNAVADLVTEANLGGQGETTQLNPLVPISKATAEKLSNELDEMISNVKHVDSERIFVHDYSDRVAESRRKFQMELKAVHPNLNYEDGMKIKKADLHTILAHAHLRIDQLSQKLIDSKLNEEKRIQSIIAKKKEDLLEKLRLETNAKQAAVIPEFDKKKLDAELARATAEIQKKYDEKLKEVVRTQKQLYDIEHAKDVDEAVLKERNLHSSAVGKALAQLAGIEKALSGHLQMDIENRKSKQMWLATQNLKGTVIFGNRASCCMEGRRAPLGDQMKTLLSCCGGGNSDEFVKTINTAMSKTSKVRGEYTEQDLNTRFNKVCRIGRRVAYVNEGGALAHLYSWLKSSLTIELVPKKGANESLTPAVENNFTLLTRAEQLWKSGKKSDAIRVLQLTDGATRRVAADFIADARRQHEALLLSRLLLAHAALTSIRSTY.

The transit peptide at 1–12 directs the protein to the mitochondrion; it reads MRGSRNLLTQRL. Over 13-20 the chain is Mitochondrial matrix; that stretch reads ASSRATGS. A helical membrane pass occupies residues 21–43; that stretch reads SGGLKFVGATVGAVTAGAAGVAG. The Mitochondrial intermembrane portion of the chain corresponds to 44–654; it reads YASYDNEFRK…AALTSIRSTY (611 aa). Residues 115 to 129 are compositionally biased toward basic and acidic residues; that stretch reads LKETTEPKKIEKKPE. The disordered stretch occupies residues 115-140; that stretch reads LKETTEPKKIEKKPENPYIGAKTPLN.

It belongs to the MICOS complex subunit Mic60 family. Component of the mitochondrial contact site and cristae organizing system (MICOS) complex. In terms of tissue distribution, expressed in the gonads and muscle cells.

The protein localises to the mitochondrion inner membrane. Its subcellular location is the cytoplasm. Sustains mitochondrial morphology probably through maintaining cristae morphology. May act as a component of the MICOS complex, a large protein complex of the mitochondria. In Caenorhabditis elegans, this protein is MICOS complex subunit MIC60-2.